The chain runs to 424 residues: Envelope glycoprotein M (424 aa).

Residues 1–23 (MASRARMERNYRGLSHIDYVHKK) are Intravirion-facing. Residues 24–44 (MWVVQAVCFGIAVLVFFGTLV) form a helical membrane-spanning segment. Residues 45–94 (AASINLTEGFPCFFAAVVDYRTVNTTLVHTGLTYPRLGGVVPVLFFQTKA) lie on the Virion surface side of the membrane. The chain crosses the membrane as a helical span at residues 95–115 (VVFFFYATSIVFVFLVCYITV). At 116–143 (GAIISSKKHVGAAYMGSGAFVFSLMASP) the chain is on the intravirion side. Residues 144–164 (LTILLGTVSIWLLQAVVIVLA) form a helical membrane-spanning segment. The Virion surface portion of the chain corresponds to 165 to 166 (HK). A helical membrane pass occupies residues 167 to 187 (LIVLAAAVYLVHFSTITFFYG). Over 188–226 (YFCGRGVDSKVYAEDISSAKDIDGSLHKLIGNVRAMMVN) the chain is Intravirion. The helical transmembrane segment at 227 to 247 (LLSIVYSIILIMSSLMFGMLL) threads the bilayer. Topologically, residues 248-261 (ANSFTLKFWHVIVT) are virion surface. Residues 262 to 282 (VLITTSVLTLIYLLVIEFLIA) form a helical membrane-spanning segment. Position 283 (Arg-283) is a topological domain, intravirion. The chain crosses the membrane as a helical span at residues 284–304 (YVHIILGAYIGLLIGYGMLWT). The Virion surface segment spans residues 305–327 (TTCDYVNRFYYAMGANASNLRIA). Residues 328–348 (CHSVLAVFTVLILLAMVVRLI) traverse the membrane as a helical segment. At 349–424 (RASLYHRRRS…YSGSESEWDD (76 aa)) the chain is on the intravirion side. A disordered region spans residues 382 to 424 (SYKQRGSQSEDERALTQSRSAEASDEDTIYDRVYSGSESEWDD).

This sequence belongs to the herpesviridae glycoprotein M family. In terms of assembly, interacts (via N-terminus) with gN (via N-terminus). The gM-gN heterodimer forms the gCII complex.

The protein resides in the virion membrane. Its subcellular location is the host Golgi apparatus. It is found in the host trans-Golgi network. The protein localises to the host endosome membrane. It localises to the host nucleus inner membrane. Envelope glycoprotein important for virion assembly and egress. Plays a role in the correct incorporation of gH-gL into virion membrane. Directs the glycoprotein N (gN) to the host trans-Golgi network. The sequence is that of Envelope glycoprotein M from Gallid herpesvirus 2 (strain Chicken/Md5/ATCC VR-987) (GaHV-2).